A 454-amino-acid chain; its full sequence is Uridine kinase (454 aa).

An ATP-binding site is contributed by 28–35 (GPSGSGKT).

The protein belongs to the uridine kinase family.

It is found in the cytoplasm. It localises to the nucleus. It catalyses the reaction uridine + ATP = UMP + ADP + H(+). The enzyme catalyses cytidine + ATP = CMP + ADP + H(+). Its pathway is pyrimidine metabolism; CTP biosynthesis via salvage pathway; CTP from cytidine: step 1/3. It functions in the pathway pyrimidine metabolism; UMP biosynthesis via salvage pathway; UMP from uridine: step 1/1. Its function is as follows. Catalyzes the conversion of uridine into UMP and cytidine into CMP in the pyrimidine salvage pathway. The sequence is that of Uridine kinase (urk1) from Schizosaccharomyces pombe (strain 972 / ATCC 24843) (Fission yeast).